Here is a 1407-residue protein sequence, read N- to C-terminus: DNA-directed RNA polymerase subunit beta' (1407 aa).

Zn(2+) is bound by residues Cys70, Cys72, Cys85, and Cys88. Residues Asp460, Asp462, and Asp464 each coordinate Mg(2+). 4 residues coordinate Zn(2+): Cys814, Cys888, Cys895, and Cys898.

The protein belongs to the RNA polymerase beta' chain family. The RNAP catalytic core consists of 2 alpha, 1 beta, 1 beta' and 1 omega subunit. When a sigma factor is associated with the core the holoenzyme is formed, which can initiate transcription. The cofactor is Mg(2+). Zn(2+) is required as a cofactor.

The catalysed reaction is RNA(n) + a ribonucleoside 5'-triphosphate = RNA(n+1) + diphosphate. Functionally, DNA-dependent RNA polymerase catalyzes the transcription of DNA into RNA using the four ribonucleoside triphosphates as substrates. This is DNA-directed RNA polymerase subunit beta' from Citrobacter koseri (strain ATCC BAA-895 / CDC 4225-83 / SGSC4696).